The following is a 374-amino-acid chain: Probable neutral protease 2 homolog TRV_05367 (374 aa).

The N-terminal stretch at 1-19 (MQVIVALAALGSLAAPALG) is a signal peptide. The propeptide occupies 20–189 (FSIPRGVPVS…RGPLTRINKR (170 aa)). Intrachain disulfides connect C197-C267 and C274-C292. H317 serves as a coordination point for Zn(2+). E318 is a catalytic residue. Zn(2+) contacts are provided by H321 and D332.

Belongs to the peptidase M35 family. It depends on Zn(2+) as a cofactor.

The protein localises to the secreted. The catalysed reaction is Preferential cleavage of bonds with hydrophobic residues in P1'. Also 3-Asn-|-Gln-4 and 8-Gly-|-Ser-9 bonds in insulin B chain.. Its function is as follows. Probable secreted metalloprotease that shows high activities on basic nuclear substrates such as histone and protamine. May be involved in virulence. This chain is Probable neutral protease 2 homolog TRV_05367, found in Trichophyton verrucosum (strain HKI 0517).